Here is a 546-residue protein sequence, read N- to C-terminus: MAKEIKYDMDARDLLKKGVDELANAVKVTLGPKGRNVIIEKKFGAPHITKDGVTVAKEVELTCPFENMGAQLVKEVASKTNDNAGDGTTTATVLAQSIIGVGLKNVTAGANPMDLKRGIDKAVAKVVESIANQAEAVGDKFEKIEHVAKISANGDEAIGKLIAEAMQRVKTEGVITVEEAKGTETTVDVVEGMQFDRGYISPYFVTDTEKMECQMENPYILIYDKKISVLKDLLPILEPTVQSGRPLLIIAEDIDSEALATLVVNRLRGSLKICAVKAPGFGDRRKAMLEDIAVLTGGTVISEEKGLKLEGATMDMLGTAEKITVDKDTTTIVNGAGDKEAIQARIGQIKIQMENTTSDYDKEKLQERLAKMAGGVAVLYVGAPSEVEMKEKKDRVDDALHATRAAIEEGTVPGGGVAYIRAIDALEGMKGDNEDETTGIEIVKRAIEEPLRQIVANAGKEGAVIVQKVKEGKGDFGYNARKDCFENLCEAGVIDPAKVTRVALENAASIAGMFLTTECVIAEKKEETPAMPPMNPGMGGGMGGMM.

Residues 29 to 32, K50, 86 to 90, G415, and D495 each bind ATP; these read TLGP and DGTTT.

This sequence belongs to the chaperonin (HSP60) family. In terms of assembly, forms a cylinder of 14 subunits composed of two heptameric rings stacked back-to-back. Interacts with the co-chaperonin GroES.

It is found in the cytoplasm. The enzyme catalyses ATP + H2O + a folded polypeptide = ADP + phosphate + an unfolded polypeptide.. In terms of biological role, together with its co-chaperonin GroES, plays an essential role in assisting protein folding. The GroEL-GroES system forms a nano-cage that allows encapsulation of the non-native substrate proteins and provides a physical environment optimized to promote and accelerate protein folding. This Parabacteroides distasonis (strain ATCC 8503 / DSM 20701 / CIP 104284 / JCM 5825 / NCTC 11152) protein is Chaperonin GroEL.